A 323-amino-acid polypeptide reads, in one-letter code: Elongation factor P--(R)-beta-lysine ligase (323 aa).

Residue 74-76 (SPE) coordinates substrate. Residues 98–100 (RNE) and asparagine 107 contribute to the ATP site. Residue tyrosine 116 participates in substrate binding. 242 to 243 (EL) contacts ATP. Position 249 (glutamate 249) interacts with substrate. Glycine 298 lines the ATP pocket.

The protein belongs to the class-II aminoacyl-tRNA synthetase family. EpmA subfamily. Homodimer.

It carries out the reaction D-beta-lysine + L-lysyl-[protein] + ATP = N(6)-((3R)-3,6-diaminohexanoyl)-L-lysyl-[protein] + AMP + diphosphate + H(+). With EpmB is involved in the beta-lysylation step of the post-translational modification of translation elongation factor P (EF-P). Catalyzes the ATP-dependent activation of (R)-beta-lysine produced by EpmB, forming a lysyl-adenylate, from which the beta-lysyl moiety is then transferred to the epsilon-amino group of a conserved specific lysine residue in EF-P. The polypeptide is Elongation factor P--(R)-beta-lysine ligase (Vibrio parahaemolyticus serotype O3:K6 (strain RIMD 2210633)).